A 439-amino-acid chain; its full sequence is Probable non-inhibitory serpin-Z9 (439 aa).

The segment at Arg-12–Pro-44 is disordered. Positions Ala-31–Pro-44 are enriched in pro residues. The interval Gly-389–Pro-413 is RCL.

This sequence belongs to the serpin family.

The protein is Probable non-inhibitory serpin-Z9 of Oryza sativa subsp. japonica (Rice).